Reading from the N-terminus, the 356-residue chain is NADH-quinone oxidoreductase subunit H (356 aa).

8 consecutive transmembrane segments (helical) span residues 18–38, 87–107, 120–140, 166–186, 205–225, 265–285, 292–312, and 333–353; these read IIMI…IAYI, GVFL…WAVI, VGIL…IMAG, IGFV…SAVV, ILNW…VSAL, AITT…LPPI, WVPG…LIAM, and FLPL…FAGI.

The protein belongs to the complex I subunit 1 family. NDH-1 is composed of 14 different subunits. Subunits NuoA, H, J, K, L, M, N constitute the membrane sector of the complex.

It is found in the cell inner membrane. It carries out the reaction a quinone + NADH + 5 H(+)(in) = a quinol + NAD(+) + 4 H(+)(out). NDH-1 shuttles electrons from NADH, via FMN and iron-sulfur (Fe-S) centers, to quinones in the respiratory chain. The immediate electron acceptor for the enzyme in this species is believed to be ubiquinone. Couples the redox reaction to proton translocation (for every two electrons transferred, four hydrogen ions are translocated across the cytoplasmic membrane), and thus conserves the redox energy in a proton gradient. This subunit may bind ubiquinone. The sequence is that of NADH-quinone oxidoreductase subunit H from Bradyrhizobium sp. (strain ORS 278).